The chain runs to 175 residues: Deoxyuridine 5'-triphosphate nucleotidohydrolase (175 aa).

Substrate contacts are provided by residues 67–69 (RSG), Asn80, 84–86 (TVD), and Lys94. The segment at 138-175 (RAEGGFGSTGGHAAVGADTNGQQGGNRYASVVSDRKGQ) is disordered.

Belongs to the dUTPase family. Mg(2+) is required as a cofactor.

The catalysed reaction is dUTP + H2O = dUMP + diphosphate + H(+). It participates in pyrimidine metabolism; dUMP biosynthesis; dUMP from dCTP (dUTP route): step 2/2. This enzyme is involved in nucleotide metabolism: it produces dUMP, the immediate precursor of thymidine nucleotides and it decreases the intracellular concentration of dUTP so that uracil cannot be incorporated into DNA. The sequence is that of Deoxyuridine 5'-triphosphate nucleotidohydrolase from Streptomyces avermitilis (strain ATCC 31267 / DSM 46492 / JCM 5070 / NBRC 14893 / NCIMB 12804 / NRRL 8165 / MA-4680).